The sequence spans 204 residues: Urease accessory protein UreG (204 aa).

12–19 (GPVGSGKT) contributes to the GTP binding site.

Belongs to the SIMIBI class G3E GTPase family. UreG subfamily. In terms of assembly, homodimer. UreD, UreF and UreG form a complex that acts as a GTP-hydrolysis-dependent molecular chaperone, activating the urease apoprotein by helping to assemble the nickel containing metallocenter of UreC. The UreE protein probably delivers the nickel.

It localises to the cytoplasm. Facilitates the functional incorporation of the urease nickel metallocenter. This process requires GTP hydrolysis, probably effectuated by UreG. In Pseudomonas fluorescens (strain ATCC BAA-477 / NRRL B-23932 / Pf-5), this protein is Urease accessory protein UreG.